Consider the following 394-residue polypeptide: MAKEKFDRSKEHANIGTIGHVDHGKTTLTAAIATVLAKNGDTVAQSYDMIDNAPEEKERGITINTAHIEYQTDKRHYAHVDCPGHADYVKNMITGAAQMDGGILVVSAADGPMPQTREHILLSRNVGVPALVVFLNKVDMVDDEELLELVEMEVRDLLSEYDFPGDDVPVIAGSALKALEGDAEYEQKILDLMQAVDDYIPTPERDSDKPFMMPVEDVFSITGRGTVATGRVERGQIKVGEEVEIIGMHETSKTTVTGVEMFRKLLDYAEAGDNIGALLRGVAREDVQRGQVLAAPGSITPHTKFKAEVYVLSKDEGGRHTPFFTNYRPQFYFRTTDVTGVVNLPEGTEMVMPGDNVEMTVELIAPIAIEDGTRFSIREGGRTVGSGVVTEIFE.

The tr-type G domain maps to 10-204 (KEHANIGTIG…AVDDYIPTPE (195 aa)). A G1 region spans residues 19-26 (GHVDHGKT). Residue 19-26 (GHVDHGKT) coordinates GTP. Thr-26 is a Mg(2+) binding site. The interval 60-64 (GITIN) is G2. The interval 81–84 (DCPG) is G3. GTP-binding positions include 81-85 (DCPGH) and 136-139 (NKVD). The tract at residues 136 to 139 (NKVD) is G4. Residues 174–176 (SAL) are G5.

Belongs to the TRAFAC class translation factor GTPase superfamily. Classic translation factor GTPase family. EF-Tu/EF-1A subfamily. Monomer.

It is found in the cytoplasm. It carries out the reaction GTP + H2O = GDP + phosphate + H(+). GTP hydrolase that promotes the GTP-dependent binding of aminoacyl-tRNA to the A-site of ribosomes during protein biosynthesis. The polypeptide is Elongation factor Tu (Staphylococcus epidermidis (strain ATCC 35984 / DSM 28319 / BCRC 17069 / CCUG 31568 / BM 3577 / RP62A)).